A 207-amino-acid polypeptide reads, in one-letter code: Ribosomal RNA small subunit methyltransferase G (207 aa).

S-adenosyl-L-methionine contacts are provided by residues G73, L78, 124 to 125 (VE), and R139.

It belongs to the methyltransferase superfamily. RNA methyltransferase RsmG family.

The protein localises to the cytoplasm. It catalyses the reaction guanosine(527) in 16S rRNA + S-adenosyl-L-methionine = N(7)-methylguanosine(527) in 16S rRNA + S-adenosyl-L-homocysteine. Specifically methylates the N7 position of guanine in position 527 of 16S rRNA. This chain is Ribosomal RNA small subunit methyltransferase G, found in Escherichia coli O1:K1 / APEC.